Consider the following 844-residue polypeptide: DNA mismatch repair protein MutS (844 aa).

610–617 (GPNMGGKS) serves as a coordination point for ATP.

It belongs to the DNA mismatch repair MutS family.

This protein is involved in the repair of mismatches in DNA. It is possible that it carries out the mismatch recognition step. This protein has a weak ATPase activity. The sequence is that of DNA mismatch repair protein MutS from Francisella tularensis subsp. holarctica (strain FTNF002-00 / FTA).